Here is a 533-residue protein sequence, read N- to C-terminus: MCGILALMLADPHQQACPEIYEGLYSLQHRGQDAAGIVTAGNKGRLYQCKGSGMVADVFSQHQLRQLVGSMGIGHLRYPTAGSCAHSEAQPFYVNSPYGLVLGHNGNLINGPELRRFLDTEAHRHVNTGSDSELLLNIFAYELQRLDKFRINENDIFEALRNVYDRVNGGYACVAMIAGLGVLGFRDPNGIRPLVIGERDTPEGKDYMLASESVVLTQFGYRTFRDIRPGECVFIRRSNREDILAGFRGPRLFSRQILPCLRFTPDIFEYVYFARPDSVIDGLSVYQSRLNMGEKLAHTIMKRFGPDYMEKIDAVIPVPDSARTSALALAQTAQLPYVEAFIKNRYIGRTFIMPGQQIRRKSVRRKLNVQPQEFFDKNVLIVDDSIVRGTTSREIVQMARESGAKNVYLASCAPMITHPHVYGIDLADCKDLIAYGKTEDEVAEAISADGVIYQTLEDLLDSCRTAELTEFEVGLFTGEYTTGASKEYLVHLEQMRIANNRARKHSFAEDEEREAPEDISLHNTHSDVTFDFV.

The active-site Nucleophile is cysteine 2. One can recognise a Glutamine amidotransferase type-2 domain in the interval 2 to 238; the sequence is CGILALMLAD…PGECVFIRRS (237 aa). Mg(2+) is bound by residues aspartate 383 and aspartate 384. Serine 506 is modified (phosphoserine).

This sequence in the C-terminal section; belongs to the purine/pyrimidine phosphoribosyltransferase family. The cofactor is Mg(2+).

It carries out the reaction 5-phospho-beta-D-ribosylamine + L-glutamate + diphosphate = 5-phospho-alpha-D-ribose 1-diphosphate + L-glutamine + H2O. The protein operates within purine metabolism; IMP biosynthesis via de novo pathway; N(1)-(5-phospho-D-ribosyl)glycinamide from 5-phospho-alpha-D-ribose 1-diphosphate: step 1/2. This Schizosaccharomyces pombe (strain 972 / ATCC 24843) (Fission yeast) protein is Amidophosphoribosyltransferase (ade4).